Reading from the N-terminus, the 188-residue chain is Elongation factor P (188 aa).

The protein belongs to the elongation factor P family.

The protein localises to the cytoplasm. It participates in protein biosynthesis; polypeptide chain elongation. In terms of biological role, involved in peptide bond synthesis. Stimulates efficient translation and peptide-bond synthesis on native or reconstituted 70S ribosomes in vitro. Probably functions indirectly by altering the affinity of the ribosome for aminoacyl-tRNA, thus increasing their reactivity as acceptors for peptidyl transferase. This is Elongation factor P from Streptomyces coelicolor (strain ATCC BAA-471 / A3(2) / M145).